The following is a 73-amino-acid chain: Lactogenin (73 aa).

Q1 bears the Pyrrolidone carboxylic acid mark.

It belongs to the pancreatic ribonuclease family. Milk.

It is found in the secreted. Its function is as follows. Secretory RNase specific towards pyrimidine bases, with higher activity towards poly C than poly U. Inhibits cell-free translation. The chain is Lactogenin from Bos taurus (Bovine).